Reading from the N-terminus, the 549-residue chain is MTVTSIRRAYQVIKTALHYGLDELIPSKVKPWYFRLLRCTFFWLRNQHKDKVGGERLKLVMQELGPVYIKFGQMLSTRRDLLDDEWAEELAMLQDRVPPFDSSIAREMIELELGTSIDTYFDDFDNTPLASASISQVHTATLKSNGKAVVLKVLRPNVEAQVDADLHLMSQAANFLETVLGHGNRLRPAEVVEDYRTTIEGELNLKLEALNAVKLRNNFLDSGSLYIPYMYEELCFTRLIVMERIEGIPVSDMAALKAQGTNLKVLAERGVELFFTQVFRDNFFHADMHPGNIFVSREHPEDPYYIGLDCGIMGTLTEEDKRYLAENFLAFFNRDYHRIAQLYIESGWVSPDTDIAAFEQAVKVVCEPMFNKPLDEISFGHVLLELFRTARRFDMVVQPQLVLLEKTLLYIEGLGRQLYPQLDLWQTAKPFLEKWMSEQVGPKGMASKIKKEFPYWADKLPELPELVYDNLKMGRNFVKSQNQMLDRYLKQQQKAHKSNYLLITSAVLVICGTILFNQNATLWASYGSITVGVVLWLLGWRSRPKKRKF.

In terms of domain architecture, Protein kinase spans 123–501 (DFDNTPLASA…QQKAHKSNYL (379 aa)). Residues 129–137 (LASASISQV) and Lys152 contribute to the ATP site. Residue Asp287 is the Proton acceptor of the active site. Helical transmembrane passes span 498–518 (SNYL…LFNQ) and 520–540 (ATLW…LLGW).

This sequence belongs to the ABC1 family. UbiB subfamily.

The protein resides in the cell inner membrane. The protein operates within cofactor biosynthesis; ubiquinone biosynthesis [regulation]. In terms of biological role, is probably a protein kinase regulator of UbiI activity which is involved in aerobic coenzyme Q (ubiquinone) biosynthesis. This chain is Probable protein kinase UbiB, found in Shewanella woodyi (strain ATCC 51908 / MS32).